We begin with the raw amino-acid sequence, 122 residues long: Large ribosomal subunit protein uL14 (122 aa).

It belongs to the universal ribosomal protein uL14 family. Part of the 50S ribosomal subunit. Forms a cluster with proteins L3 and L19. In the 70S ribosome, L14 and L19 interact and together make contacts with the 16S rRNA in bridges B5 and B8.

Its function is as follows. Binds to 23S rRNA. Forms part of two intersubunit bridges in the 70S ribosome. This is Large ribosomal subunit protein uL14 from Nitrosomonas europaea (strain ATCC 19718 / CIP 103999 / KCTC 2705 / NBRC 14298).